Consider the following 475-residue polypeptide: Ribulose bisphosphate carboxylase large chain (475 aa).

Residues 1–2 (MS) constitute a propeptide that is removed on maturation. Pro-3 bears the N-acetylproline mark. Lys-14 is subject to N6,N6,N6-trimethyllysine. The substrate site is built by Asn-123 and Thr-173. Lys-175 serves as the catalytic Proton acceptor. Residue Lys-177 coordinates substrate. The Mg(2+) site is built by Lys-201, Asp-203, and Glu-204. At Lys-201 the chain carries N6-carboxylysine. The active-site Proton acceptor is His-294. Substrate is bound by residues Arg-295, His-327, and Ser-379.

The protein belongs to the RuBisCO large chain family. Type I subfamily. In terms of assembly, heterohexadecamer of 8 large chains and 8 small chains; disulfide-linked. The disulfide link is formed within the large subunit homodimers. The cofactor is Mg(2+). Post-translationally, the disulfide bond which can form in the large chain dimeric partners within the hexadecamer appears to be associated with oxidative stress and protein turnover.

It is found in the plastid. The protein localises to the chloroplast. It catalyses the reaction 2 (2R)-3-phosphoglycerate + 2 H(+) = D-ribulose 1,5-bisphosphate + CO2 + H2O. It carries out the reaction D-ribulose 1,5-bisphosphate + O2 = 2-phosphoglycolate + (2R)-3-phosphoglycerate + 2 H(+). Functionally, ruBisCO catalyzes two reactions: the carboxylation of D-ribulose 1,5-bisphosphate, the primary event in carbon dioxide fixation, as well as the oxidative fragmentation of the pentose substrate in the photorespiration process. Both reactions occur simultaneously and in competition at the same active site. The chain is Ribulose bisphosphate carboxylase large chain from Lotus japonicus (Lotus corniculatus var. japonicus).